Consider the following 122-residue polypeptide: MIEQLFPEVTCYALRYLDYSSLCQLSMTSSSMRKTANDDVLWRALYFQEFTEETNGGTPVNGWKAFFAVTKQVMTVNDKFFSILDSRSLPRMTSLWLNSDYVKCFNGSGELFTGYLLTYPLL.

In terms of domain architecture, F-box spans 1–45; the sequence is MIEQLFPEVTCYALRYLDYSSLCQLSMTSSSMRKTANDDVLWRAL.

The sequence is that of Probable F-box protein At4g23960 from Arabidopsis thaliana (Mouse-ear cress).